A 189-amino-acid chain; its full sequence is Elongation factor P 2 (189 aa).

It belongs to the elongation factor P family.

It is found in the cytoplasm. Its pathway is protein biosynthesis; polypeptide chain elongation. Its function is as follows. Involved in peptide bond synthesis. Stimulates efficient translation and peptide-bond synthesis on native or reconstituted 70S ribosomes in vitro. Probably functions indirectly by altering the affinity of the ribosome for aminoacyl-tRNA, thus increasing their reactivity as acceptors for peptidyl transferase. The chain is Elongation factor P 2 (efp2) from Lactobacillus johnsonii (strain CNCM I-12250 / La1 / NCC 533).